Consider the following 385-residue polypeptide: SWI/SNF-related matrix-associated actin-dependent regulator of chromatin subfamily B member 1 (385 aa).

The tract at residues 1 to 113 is DNA-binding; sequence MMMMALSKTF…DEKYKAVSIS (113 aa). Residues K106, K108, and K124 each participate in a glycyl lysine isopeptide (Lys-Gly) (interchain with G-Cter in SUMO2) cross-link. Phosphoserine is present on S129. K161 participates in a covalent cross-link: Glycyl lysine isopeptide (Lys-Gly) (interchain with G-Cter in SUMO2). An HIV-1 integrase-binding region spans residues 183-243; that stretch reads PEVLVPIRLD…VPAIASAIRQ (61 aa). Repeat copies occupy residues 186-245 and 259-319. The interval 186–245 is MYC-binding; that stretch reads LVPIRLDMEIDGQKLRDAFTWNMNEKLMTPEMFSEILCDDLDLNPLTFVPAIASAIRQQI. The interval 186-319 is 2 X approximate tandem repeats; the sequence is LVPIRLDMEI…TIAYSIRGQL (134 aa). Positions 304–318 are interaction with PPP1R15A; sequence GGEFVTTIAYSIRGQ.

It belongs to the SNF5 family. Component of the multiprotein chromatin-remodeling complexes SWI/SNF: SWI/SNF-A (BAF), SWI/SNF-B (PBAF) and related complexes. The canonical complex contains a catalytic subunit (either SMARCA4/BRG1/BAF190A or SMARCA2/BRM/BAF190B) and at least SMARCE1, ACTL6A/BAF53, SMARCC1/BAF155, SMARCC2/BAF170, and SMARCB1/SNF5/BAF47. Other subunits specific to each of the complexes may also be present permitting several possible combinations developmentally and tissue specific. Component of the BAF complex, which includes at least actin (ACTB), ARID1A/BAF250A, ARID1B/BAF250B, SMARCA2/BRM, SMARCA4/BRG1/BAF190A, ACTL6A/BAF53, ACTL6B/BAF53B, SMARCE1/BAF57 SMARCC1/BAF155, SMARCC2/BAF170, SMARCB1/SNF5/INI1, and one or more SMARCD1/BAF60A, SMARCD2/BAF60B, or SMARCD3/BAF60C. In muscle cells, the BAF complex also contains DPF3. Component of neural progenitors-specific chromatin remodeling complex (npBAF complex) composed of at least, ARID1A/BAF250A or ARID1B/BAF250B, SMARCD1/BAF60A, SMARCD3/BAF60C, SMARCA2/BRM/BAF190B, SMARCA4/BRG1/BAF190A, SMARCB1/BAF47, SMARCC1/BAF155, SMARCE1/BAF57, SMARCC2/BAF170, PHF10/BAF45A, ACTL6A/BAF53A and actin. Component of neuron-specific chromatin remodeling complex (nBAF complex) composed of at least, ARID1A/BAF250A or ARID1B/BAF250B, SMARCD1/BAF60A, SMARCD3/BAF60C, SMARCA2/BRM/BAF190B, SMARCA4/BRG1/BAF190A, SMARCB1/BAF47, SMARCC1/BAF155, SMARCE1/BAF57, SMARCC2/BAF170, DPF1/BAF45B, DPF3/BAF45C, ACTL6B/BAF53B and actin. Component of the SWI/SNF-B (PBAF) chromatin remodeling complex, at least composed of SMARCA4/BRG1, SMARCB1/BAF47/SNF5, ACTL6A/BAF53A or ACTL6B/BAF53B, SMARCE1/BAF57, SMARCD1/BAF60A, SMARCD2/BAF60B, perhaps SMARCD3/BAF60C, SMARCC1/BAF155, SMARCC2/BAF170, PBRM1/BAF180, ARID2/BAF200 and actin. Binds to double-stranded DNA. Interacts with CEBPB (when not methylated). Interacts with PIH1D1. Interacts with MYK and MAEL. Interacts with PPP1R15A. Interacts with DPF2. Interacts with YWHAZ. Interacts with ERCC6. Interacts with FOS, FOSB isoform 1 and 2, FOSL1 and FOSL2. As to quaternary structure, (Microbial infection) Binds tightly to the human immunodeficiency virus-type 1 (HIV-1) integrase in vitro and stimulates its DNA-joining activity. Interacts with human papillomavirus 18 E1 protein to stimulate its viral replication. Interacts with Epstein-Barr virus protein EBNA-2.

The protein localises to the nucleus. In terms of biological role, core component of the BAF (hSWI/SNF) complex. This ATP-dependent chromatin-remodeling complex plays important roles in cell proliferation and differentiation, in cellular antiviral activities and inhibition of tumor formation. The BAF complex is able to create a stable, altered form of chromatin that constrains fewer negative supercoils than normal. This change in supercoiling would be due to the conversion of up to one-half of the nucleosomes on polynucleosomal arrays into asymmetric structures, termed altosomes, each composed of 2 histones octamers. Stimulates in vitro the remodeling activity of SMARCA4/BRG1/BAF190A. Involved in activation of CSF1 promoter. Belongs to the neural progenitors-specific chromatin remodeling complex (npBAF complex) and the neuron-specific chromatin remodeling complex (nBAF complex). During neural development a switch from a stem/progenitor to a postmitotic chromatin remodeling mechanism occurs as neurons exit the cell cycle and become committed to their adult state. The transition from proliferating neural stem/progenitor cells to postmitotic neurons requires a switch in subunit composition of the npBAF and nBAF complexes. As neural progenitors exit mitosis and differentiate into neurons, npBAF complexes which contain ACTL6A/BAF53A and PHF10/BAF45A, are exchanged for homologous alternative ACTL6B/BAF53B and DPF1/BAF45B or DPF3/BAF45C subunits in neuron-specific complexes (nBAF). The npBAF complex is essential for the self-renewal/proliferative capacity of the multipotent neural stem cells. The nBAF complex along with CREST plays a role regulating the activity of genes essential for dendrite growth. Plays a key role in cell-cycle control and causes cell cycle arrest in G0/G1. In Homo sapiens (Human), this protein is SWI/SNF-related matrix-associated actin-dependent regulator of chromatin subfamily B member 1 (SMARCB1).